A 297-amino-acid polypeptide reads, in one-letter code: F-box only protein 2 (297 aa).

The tract at residues 1-47 (MDGDGDPESVSHPEEASPEEQPEEAGAEASAEEEQLREAEEEEEAEA) is disordered. Residues 16–47 (ASPEEQPEEAGAEASAEEEQLREAEEEEEAEA) are compositionally biased toward acidic residues. One can recognise an F-box domain in the interval 48–95 (VEYLAELPEPLLLRVLAELPATELVQACRLVCLRWKELVDGAPLWLLK). Position 106 is a phosphoserine (S106). In terms of domain architecture, FBA spans 117–297 (FYFLSKRRRN…VTNSSVWVEP (181 aa)). A carbohydrate contacts are provided by residues 214 to 216 (RTD) and 279 to 280 (YW).

In terms of assembly, component of the SCF(FBXO2) complex consisting of CUL1, RBX1, SKP1 and FBXO2. Predominantly detected as heterodimer with SKP1; the heterodimer with SKP1 is not part of the SCF(FBXO2) complex. Detected in brain and cochlea, in epithelial support cells and hair cells of the organ of Corti (at protein level).

Its subcellular location is the cytoplasm. The protein resides in the microsome membrane. Its pathway is protein modification; protein ubiquitination. Functionally, substrate recognition component of a SCF (SKP1-CUL1-F-box protein) E3 ubiquitin-protein ligase complex that mediates the ubiquitination and subsequent proteasomal degradation of target proteins. Involved in the endoplasmic reticulum-associated degradation pathway (ERAD) for misfolded lumenal proteins by recognizing and binding sugar chains on unfolded glycoproteins that are retrotranslocated into the cytosol and promoting their ubiquitination and subsequent degradation. Prevents formation of cytosolic aggregates of unfolded glycoproteins that have been retrotranslocated into the cytosol. Able to recognize and bind denatured glycoproteins, preferentially those of the high-mannose type. The chain is F-box only protein 2 (Fbxo2) from Mus musculus (Mouse).